Here is a 250-residue protein sequence, read N- to C-terminus: Type III pantothenate kinase (250 aa).

Residue 13–20 (DVGNSYLK) coordinates ATP. 110-113 (GNDL) contacts substrate. Asp112 acts as the Proton acceptor in catalysis. Position 134 (Thr134) interacts with ATP. A substrate-binding site is contributed by Thr186.

The protein belongs to the type III pantothenate kinase family. Homodimer. NH4(+) serves as cofactor. It depends on K(+) as a cofactor.

Its subcellular location is the cytoplasm. It catalyses the reaction (R)-pantothenate + ATP = (R)-4'-phosphopantothenate + ADP + H(+). It functions in the pathway cofactor biosynthesis; coenzyme A biosynthesis; CoA from (R)-pantothenate: step 1/5. Its function is as follows. Catalyzes the phosphorylation of pantothenate (Pan), the first step in CoA biosynthesis. This Mycoplasmopsis synoviae (strain 53) (Mycoplasma synoviae) protein is Type III pantothenate kinase.